The sequence spans 185 residues: Peptidyl-tRNA hydrolase (185 aa).

TRNA is bound at residue Tyr-14. Catalysis depends on His-19, which acts as the Proton acceptor. 3 residues coordinate tRNA: Phe-64, Asn-66, and Asn-112.

This sequence belongs to the PTH family. In terms of assembly, monomer.

It is found in the cytoplasm. It catalyses the reaction an N-acyl-L-alpha-aminoacyl-tRNA + H2O = an N-acyl-L-amino acid + a tRNA + H(+). Hydrolyzes ribosome-free peptidyl-tRNAs (with 1 or more amino acids incorporated), which drop off the ribosome during protein synthesis, or as a result of ribosome stalling. Functionally, catalyzes the release of premature peptidyl moieties from peptidyl-tRNA molecules trapped in stalled 50S ribosomal subunits, and thus maintains levels of free tRNAs and 50S ribosomes. In Lactobacillus johnsonii (strain CNCM I-12250 / La1 / NCC 533), this protein is Peptidyl-tRNA hydrolase.